We begin with the raw amino-acid sequence, 165 residues long: Methylated-DNA--protein-cysteine methyltransferase, constitutive (165 aa).

Catalysis depends on cysteine 130, which acts as the Nucleophile; methyl group acceptor.

This sequence belongs to the MGMT family.

It localises to the cytoplasm. The catalysed reaction is a 6-O-methyl-2'-deoxyguanosine in DNA + L-cysteinyl-[protein] = S-methyl-L-cysteinyl-[protein] + a 2'-deoxyguanosine in DNA. It catalyses the reaction a 4-O-methyl-thymidine in DNA + L-cysteinyl-[protein] = a thymidine in DNA + S-methyl-L-cysteinyl-[protein]. Its function is as follows. Involved in the cellular defense against the biological effects of O6-methylguanine (O6-MeG) and O4-methylthymine (O4-MeT) in DNA. Repairs the methylated nucleobase in DNA by stoichiometrically transferring the methyl group to a cysteine residue in the enzyme. This is a suicide reaction: the enzyme is irreversibly inactivated. The protein is Methylated-DNA--protein-cysteine methyltransferase, constitutive of Bacillus subtilis (strain 168).